Reading from the N-terminus, the 711-residue chain is Putative membrane protein IgaA homolog (711 aa).

Residue Met1 is a topological domain, periplasmic. The chain crosses the membrane as a helical span at residues 2–22; that stretch reads STIVIFLAALLACSLLAGWLI. The Cytoplasmic segment spans residues 23 to 204; sequence KVRSRRRQLP…YALSRPRGLR (182 aa). 2 helical membrane passes run 205-225 and 226-246; these read EALL…TPDV and FVPW…WGLF. At 247-339 the chain is on the cytoplasmic side; sequence APPAKSSLRE…KNFPLQHWLR (93 aa). The helical transmembrane segment at 340 to 360 threads the bilayer; that stretch reads STIIAAGSLLVLFMLLFWIPL. At 361–655 the chain is on the periplasmic side; it reads DMPLKFTLSW…IPDRSGLWRY (295 aa). A helical membrane pass occupies residues 656 to 676; sequence LSTTLLLLTMLGSAIYNGVQA. The Cytoplasmic segment spans residues 677 to 711; that stretch reads WRRYQRHRTRMMEIQAYYESCLNPQLITPSESLIE.

Belongs to the IgaA family.

The protein localises to the cell inner membrane. This Escherichia coli (strain K12) protein is Putative membrane protein IgaA homolog (yrfF).